Here is a 256-residue protein sequence, read N- to C-terminus: Phosphonates import ATP-binding protein PhnC (256 aa).

The ABC transporter domain maps to Ile-7–Lys-251. Residue Gly-40–Ser-47 coordinates ATP.

The protein belongs to the ABC transporter superfamily. Phosphonates importer (TC 3.A.1.9.1) family. The complex is composed of two ATP-binding proteins (PhnC), two transmembrane proteins (PhnE) and a solute-binding protein (PhnD).

The protein resides in the cell membrane. The catalysed reaction is phosphonate(out) + ATP + H2O = phosphonate(in) + ADP + phosphate + H(+). Functionally, part of the ABC transporter complex PhnCDE involved in phosphonates import. Responsible for energy coupling to the transport system. In Lactobacillus delbrueckii subsp. bulgaricus (strain ATCC 11842 / DSM 20081 / BCRC 10696 / JCM 1002 / NBRC 13953 / NCIMB 11778 / NCTC 12712 / WDCM 00102 / Lb 14), this protein is Phosphonates import ATP-binding protein PhnC.